Here is a 2090-residue protein sequence, read N- to C-terminus: Ninein (2090 aa).

2 EF-hand domains span residues 8 to 43 (QHEA…LSLE) and 42 to 77 (LEEV…ILSR). The residue at position 152 (serine 152) is a Phosphoserine. EF-hand domains lie at 182-217 (WIEE…YGLQ) and 219-252 (VDGE…NGKS). Residue 245–252 (GLFKNGKS) participates in GTP binding. Serine 269 bears the Phosphoserine mark. A GTP-binding site is contributed by 300–304 (DGMGH). The 36-residue stretch at 317-352 (EGIENSQEILKALDFSLDGNINLTELTLALENELLV) folds into the EF-hand 5 domain. Positions 357–570 (IHQAALASFK…YRAQGRVLRL (214 aa)) form a coiled coil. 420–423 (RKLD) contributes to the GTP binding site. Residues 574–595 (NSPSEEVEANSGGIEPEHGLGS) are disordered. Coiled-coil stretches lie at residues 625–1027 (LRLE…QATS), 1068–1099 (LSLQ…QKLE), 1181–1341 (SELE…SVVQ), and 1441–1816 (QDKH…AGGK). The tract at residues 802 to 1505 (KMETECNRRT…HDLQITCSEM (704 aa)) is important for interaction with CEP170. Residues 1152–1190 (VRDLGSTGTSSVQRQEVKIEESEASVEGFSELENSEETR) form a disordered region. Serine 1550 and serine 1837 each carry phosphoserine. Coiled-coil stretches lie at residues 1854-1885 (QENE…SNLL) and 1922-2067 (ANRK…QVSL).

Homooligomer. Interacts with GSK3B/GSK3-beta via its C-terminal domain. Interacts with C14ORF166, such interaction may prevent its phosphorylation by GSK3B. Interacts with AUNIP (via N-terminus). Identified in a complex with AUNIP and AURKA. Interacts with CCDC120. Interacts (via C-terminus) with CEP250. Interacts with CEP170. Interacts with the gamma-tubulin ring complex component TUBGCP3. Interacts with gamma-tubulin. Isoform 6 does not interact with CEP170 or CEP250. Phosphorylated by AURKA/Aurora kinase A and PKA kinases but not CK2 or AURKB/ Aurora kinase B. Ubiquitous. Highly expressed in heart and skeletal muscle. Isoform 1 is more expressed than isoform 5.

It is found in the cytoplasm. The protein resides in the cytoskeleton. The protein localises to the microtubule organizing center. It localises to the centrosome. Its subcellular location is the centriole. Functionally, centrosomal protein required in the positioning and anchorage of the microtubule minus-end in epithelial cells. May also act as a centrosome maturation factor. May play a role in microtubule nucleation, by recruiting the gamma-tubulin ring complex to the centrosome. Overexpression does not perturb nucleation or elongation of microtubules but suppresses release of microtubules. Required for centriole organization and microtubule anchoring at the mother centriole. The protein is Ninein (NIN) of Homo sapiens (Human).